The following is a 1062-amino-acid chain: Carbamoyl phosphate synthase large chain (1062 aa).

The segment at 1 to 401 (MPKRTDIHKI…AMQKAVRSLE (401 aa)) is carboxyphosphate synthetic domain. ATP is bound by residues Arg-129, Arg-169, Gly-175, Gly-176, Lys-208, Ile-210, Glu-215, Gly-241, Ile-242, His-243, Gln-284, and Glu-298. The ATP-grasp 1 domain maps to 133 to 327 (KELCKELGEP…IAKMAAKIAI (195 aa)). Mg(2+)-binding residues include Gln-284, Glu-298, and Asn-300. Mn(2+) contacts are provided by Gln-284, Glu-298, and Asn-300. The tract at residues 402–546 (IDEKDLYSET…YSTYDGENES (145 aa)) is oligomerization domain. The tract at residues 547-929 (HKSGKKSVIV…ALYKAFAGAK (383 aa)) is carbamoyl phosphate synthetic domain. One can recognise an ATP-grasp 2 domain in the interval 671-861 (DQIIKKLKLN…MAQVATRVIM (191 aa)). ATP contacts are provided by Arg-707, Asp-746, Leu-748, Glu-752, Gly-777, Val-778, His-779, Ser-780, Gln-820, and Glu-832. Mg(2+)-binding residues include Gln-820, Glu-832, and Asn-834. Residues Gln-820, Glu-832, and Asn-834 each contribute to the Mn(2+) site. The region spanning 930–1062 (MQLPENGNVL…NRSFATDALK (133 aa)) is the MGS-like domain. Positions 930 to 1062 (MQLPENGNVL…NRSFATDALK (133 aa)) are allosteric domain.

It belongs to the CarB family. As to quaternary structure, composed of two chains; the small (or glutamine) chain promotes the hydrolysis of glutamine to ammonia, which is used by the large (or ammonia) chain to synthesize carbamoyl phosphate. Tetramer of heterodimers (alpha,beta)4. The cofactor is Mg(2+). Mn(2+) serves as cofactor.

The catalysed reaction is hydrogencarbonate + L-glutamine + 2 ATP + H2O = carbamoyl phosphate + L-glutamate + 2 ADP + phosphate + 2 H(+). It catalyses the reaction hydrogencarbonate + NH4(+) + 2 ATP = carbamoyl phosphate + 2 ADP + phosphate + 2 H(+). It participates in amino-acid biosynthesis; L-arginine biosynthesis; carbamoyl phosphate from bicarbonate: step 1/1. It functions in the pathway pyrimidine metabolism; UMP biosynthesis via de novo pathway; (S)-dihydroorotate from bicarbonate: step 1/3. Functionally, large subunit of the glutamine-dependent carbamoyl phosphate synthetase (CPSase). CPSase catalyzes the formation of carbamoyl phosphate from the ammonia moiety of glutamine, carbonate, and phosphate donated by ATP, constituting the first step of 2 biosynthetic pathways, one leading to arginine and/or urea and the other to pyrimidine nucleotides. The large subunit (synthetase) binds the substrates ammonia (free or transferred from glutamine from the small subunit), hydrogencarbonate and ATP and carries out an ATP-coupled ligase reaction, activating hydrogencarbonate by forming carboxy phosphate which reacts with ammonia to form carbamoyl phosphate. This is Carbamoyl phosphate synthase large chain from Lactobacillus johnsonii (strain CNCM I-12250 / La1 / NCC 533).